The sequence spans 177 residues: Inner membrane protein p22 (177 aa).

Topologically, residues 1-7 (MFNIKMT) are intravirion. Residues 8–28 (ISTLLIALIILVIIILVVFLY) form a helical membrane-spanning segment. Residues 29 to 177 (YKKQQPPKKV…IALPRNHKHA (149 aa)) are Virion surface-facing.

The protein belongs to the asfivirus inner membrane protein p22 family.

The protein resides in the virion membrane. The protein localises to the host cell membrane. This Ornithodoros (relapsing fever ticks) protein is Inner membrane protein p22.